The primary structure comprises 360 residues: Inward rectifier potassium channel 13 (360 aa).

Residues 1-50 are Cytoplasmic-facing; the sequence is MDSSNCKVIAPLLSQRYRRMVTKDGHSTLQMDGAQRGLAYLRDAWGILMD. Residues 51 to 77 form a helical membrane-spanning segment; sequence MRWRWMMLVFSASFVVHWLVFAVLWYV. Over 78–105 the chain is Extracellular; it reads LAEMNGDLELDHDAPPENHTICVKYITS. An intramembrane region (helical; Pore-forming) is located at residues 106–122; it reads FTAAFSFSLETQLTIGY. Positions 119 to 124 match the Selectivity filter motif; the sequence is TIGYGT. Topologically, residues 123-131 are extracellular; sequence GTMFPSGDC. Residues 132–157 traverse the membrane as a helical segment; it reads PSAIALLAIQMLLGLMLEAFITGAFV. At 158 to 360 the chain is on the cytoplasmic side; that stretch reads AKIARPKNRA…FQISETGLTE (203 aa). S201 carries the post-translational modification Phosphoserine; by PKC. S287 is modified (phosphoserine; by PKA).

Belongs to the inward rectifier-type potassium channel (TC 1.A.2.1) family. KCNJ13 subfamily. Homotetramer. Interacts with RAB28; the interaction may facilitate cone outer segments phagocytosis. Post-translationally, phosphorylation at Ser-201 by PKC strongly inhibits ionic currents, while phosphorylation at Ser-287 by PKA increases them. As to expression, predominantly expressed in small intestine. Expression is also detected in stomach, kidney, and all central nervous system regions tested with the exception of spinal cord.

Its subcellular location is the membrane. It is found in the cell membrane. The catalysed reaction is K(+)(in) = K(+)(out). Inhibited by Ba(2+) and Cs(+), although sensitivity to those inhibitors is much lower than in other Kir channels. In terms of biological role, inward rectifier potassium channels are characterized by a greater tendency to allow potassium to flow into the cell rather than out of it. Their voltage dependence is regulated by the concentration of extracellular potassium; as external potassium is raised, the voltage range of the channel opening shifts to more positive voltages. The inward rectification is mainly due to the blockage of outward current by internal magnesium. KCNJ13 has a very low single channel conductance, low sensitivity to block by external barium and cesium, and no dependence of its inward rectification properties on the internal blocking particle magnesium. This chain is Inward rectifier potassium channel 13 (KCNJ13), found in Homo sapiens (Human).